A 987-amino-acid chain; its full sequence is AP3-complex subunit beta-A (987 aa).

Positions 586–662 (QDQLSDLDKQ…ISETSVSADQ (77 aa)) are disordered. Acidic residues predominate over residues 603–613 (DGSEESSETGD). The span at 614–631 (ENGSSDYDSESSNGSDFS) shows a compositional bias: low complexity.

It belongs to the adaptor complexes large subunit family. Adaptor protein complex 3 (AP-3) is a heterotetramer composed of two large adaptins (delta-type subunit and beta-type subunit), a medium adaptin (mu-type subunit) and a small adaptin (sigma-type subunit).

It is found in the cytoplasm. The protein localises to the golgi apparatus. The protein resides in the cytoplasmic vesicle membrane. In terms of biological role, part of the AP-3 complex, an adaptor-related complex which seems to be clathrin-associated. The complex is associated with the Golgi region as well as more peripheral structures. It facilitates the budding of vesicles from the Golgi membrane and may be directly involved in trafficking to the vacuole. It also function in maintaining the identity of lytic vacuoles and in regulating the transition between storage and lytic vacuoles. The protein is AP3-complex subunit beta-A (AP3BA) of Arabidopsis thaliana (Mouse-ear cress).